The chain runs to 490 residues: Adenylyltransferase and sulfurtransferase uba4 (490 aa).

A disordered region spans residues 33 to 54; it reads EAAKTPPYSDSTETDRGSSSST. Residues Gly96, Asp117, 124 to 128, Lys141, and 185 to 186 contribute to the ATP site; these read SNLHR and DH. Zn(2+) contacts are provided by Cys234 and Cys237. The active-site Glycyl thioester intermediate; for adenylyltransferase activity is Cys251. Zn(2+)-binding residues include Cys323 and Cys326. The Rhodanese domain maps to 379 to 488; sequence EHGKPVLLDV…WKREVDSTLP (110 aa). Residue Cys443 is the Cysteine persulfide intermediate; for sulfurtransferase activity of the active site.

This sequence in the N-terminal section; belongs to the HesA/MoeB/ThiF family. UBA4 subfamily. The cofactor is Zn(2+).

It is found in the cytoplasm. Its subcellular location is the cytosol. It catalyses the reaction [molybdopterin-synthase sulfur-carrier protein]-C-terminal Gly-Gly + ATP + H(+) = [molybdopterin-synthase sulfur-carrier protein]-C-terminal Gly-Gly-AMP + diphosphate. It carries out the reaction [molybdopterin-synthase sulfur-carrier protein]-C-terminal Gly-Gly-AMP + S-sulfanyl-L-cysteinyl-[cysteine desulfurase] + AH2 = [molybdopterin-synthase sulfur-carrier protein]-C-terminal-Gly-aminoethanethioate + L-cysteinyl-[cysteine desulfurase] + A + AMP + 2 H(+). Its pathway is tRNA modification; 5-methoxycarbonylmethyl-2-thiouridine-tRNA biosynthesis. In terms of biological role, plays a central role in 2-thiolation of mcm(5)S(2)U at tRNA wobble positions of cytosolic tRNA(Lys), tRNA(Glu) and tRNA(Gln). Also essential during biosynthesis of the molybdenum cofactor. Acts by mediating the C-terminal thiocarboxylation of sulfur carriers URM1 and MOCS2A. Its N-terminus first activates urm1 and MOCS2A as acyl-adenylates (-COAMP), then the persulfide sulfur on the catalytic cysteine is transferred to URM1 and MOCS2A to form thiocarboxylation (-COSH) of their C-terminus. The reaction probably involves hydrogen sulfide that is generated from the persulfide intermediate and that acts as a nucleophile towards URM1 and MOCS2A. Subsequently, a transient disulfide bond is formed. Does not use thiosulfate as sulfur donor; NFS1 probably acting as a sulfur donor for thiocarboxylation reactions. The polypeptide is Adenylyltransferase and sulfurtransferase uba4 (Pyricularia oryzae (strain 70-15 / ATCC MYA-4617 / FGSC 8958) (Rice blast fungus)).